The sequence spans 63 residues: MLGQSIRRFTTSVVRRSHYEEGPGKNLPFSVENKWRLLAMMTVYFGSGFAAPFFIVRHQLLKK.

Residues 1–16 (MLGQSIRRFTTSVVRR) constitute a mitochondrion transit peptide. Over 17-34 (SHYEEGPGKNLPFSVENK) the chain is Mitochondrial matrix. At lysine 25 the chain carries N6-acetyllysine; alternate. Lysine 25 is subject to N6-succinyllysine; alternate. A helical membrane pass occupies residues 35–57 (WRLLAMMTVYFGSGFAAPFFIVR). Over 58–63 (HQLLKK) the chain is Mitochondrial intermembrane.

Belongs to the cytochrome c oxidase VIIc family. As to quaternary structure, component of the cytochrome c oxidase (complex IV, CIV), a multisubunit enzyme composed of 14 subunits. The complex is composed of a catalytic core of 3 subunits MT-CO1, MT-CO2 and MT-CO3, encoded in the mitochondrial DNA, and 11 supernumerary subunits COX4I, COX5A, COX5B, COX6A, COX6B, COX6C, COX7A, COX7B, COX7C, COX8 and NDUFA4, which are encoded in the nuclear genome. The complex exists as a monomer or a dimer and forms supercomplexes (SCs) in the inner mitochondrial membrane with NADH-ubiquinone oxidoreductase (complex I, CI) and ubiquinol-cytochrome c oxidoreductase (cytochrome b-c1 complex, complex III, CIII), resulting in different assemblies (supercomplex SCI(1)III(2)IV(1) and megacomplex MCI(2)III(2)IV(2)). Interacts with RAB5IF.

The protein localises to the mitochondrion inner membrane. Its pathway is energy metabolism; oxidative phosphorylation. In terms of biological role, component of the cytochrome c oxidase, the last enzyme in the mitochondrial electron transport chain which drives oxidative phosphorylation. The respiratory chain contains 3 multisubunit complexes succinate dehydrogenase (complex II, CII), ubiquinol-cytochrome c oxidoreductase (cytochrome b-c1 complex, complex III, CIII) and cytochrome c oxidase (complex IV, CIV), that cooperate to transfer electrons derived from NADH and succinate to molecular oxygen, creating an electrochemical gradient over the inner membrane that drives transmembrane transport and the ATP synthase. Cytochrome c oxidase is the component of the respiratory chain that catalyzes the reduction of oxygen to water. Electrons originating from reduced cytochrome c in the intermembrane space (IMS) are transferred via the dinuclear copper A center (CU(A)) of subunit 2 and heme A of subunit 1 to the active site in subunit 1, a binuclear center (BNC) formed by heme A3 and copper B (CU(B)). The BNC reduces molecular oxygen to 2 water molecules using 4 electrons from cytochrome c in the IMS and 4 protons from the mitochondrial matrix. This chain is Cytochrome c oxidase subunit 7C, mitochondrial (Cox7c), found in Mus musculus (Mouse).